We begin with the raw amino-acid sequence, 342 residues long: N-acetyl-gamma-glutamyl-phosphate reductase (342 aa).

Residue Cys-149 is part of the active site.

It belongs to the NAGSA dehydrogenase family. Type 1 subfamily.

The protein localises to the cytoplasm. The catalysed reaction is N-acetyl-L-glutamate 5-semialdehyde + phosphate + NADP(+) = N-acetyl-L-glutamyl 5-phosphate + NADPH + H(+). The protein operates within amino-acid biosynthesis; L-arginine biosynthesis; N(2)-acetyl-L-ornithine from L-glutamate: step 3/4. Functionally, catalyzes the NADPH-dependent reduction of N-acetyl-5-glutamyl phosphate to yield N-acetyl-L-glutamate 5-semialdehyde. This chain is N-acetyl-gamma-glutamyl-phosphate reductase, found in Laribacter hongkongensis (strain HLHK9).